The sequence spans 428 residues: Kynureninase (428 aa).

Pyridoxal 5'-phosphate contacts are provided by residues Thr-104, Thr-105, 132 to 135, Asp-213, His-216, and Tyr-238; that span reads FPSD. At Lys-239 the chain carries N6-(pyridoxal phosphate)lysine. Residues Trp-267 and Thr-295 each contribute to the pyridoxal 5'-phosphate site.

This sequence belongs to the kynureninase family. As to quaternary structure, homodimer. It depends on pyridoxal 5'-phosphate as a cofactor.

The enzyme catalyses L-kynurenine + H2O = anthranilate + L-alanine + H(+). It catalyses the reaction 3-hydroxy-L-kynurenine + H2O = 3-hydroxyanthranilate + L-alanine + H(+). Its pathway is amino-acid degradation; L-kynurenine degradation; L-alanine and anthranilate from L-kynurenine: step 1/1. The protein operates within cofactor biosynthesis; NAD(+) biosynthesis; quinolinate from L-kynurenine: step 2/3. Its function is as follows. Catalyzes the cleavage of L-kynurenine (L-Kyn) and L-3-hydroxykynurenine (L-3OHKyn) into anthranilic acid (AA) and 3-hydroxyanthranilic acid (3-OHAA), respectively. The chain is Kynureninase from Bacillus thuringiensis subsp. konkukian (strain 97-27).